Reading from the N-terminus, the 30-residue chain is Photosystem I reaction center subunit XII (30 aa).

A helical membrane pass occupies residues 6-26 (VFTILAIALVPAVMAALLGSA).

Belongs to the PsaM family.

The protein resides in the cellular thylakoid membrane. The polypeptide is Photosystem I reaction center subunit XII (Synechococcus sp. (strain JA-3-3Ab) (Cyanobacteria bacterium Yellowstone A-Prime)).